We begin with the raw amino-acid sequence, 422 residues long: Trigger factor (422 aa).

In terms of domain architecture, PPIase FKBP-type spans 158-242 (GDFAVVSLES…VKGLRKKELP (85 aa)).

This sequence belongs to the FKBP-type PPIase family. Tig subfamily.

Its subcellular location is the cytoplasm. The enzyme catalyses [protein]-peptidylproline (omega=180) = [protein]-peptidylproline (omega=0). Involved in protein export. Acts as a chaperone by maintaining the newly synthesized protein in an open conformation. Functions as a peptidyl-prolyl cis-trans isomerase. This Solibacter usitatus (strain Ellin6076) protein is Trigger factor.